A 214-amino-acid chain; its full sequence is Methylthioribulose-1-phosphate dehydratase (214 aa).

Zn(2+)-binding residues include histidine 103 and histidine 105.

The protein belongs to the aldolase class II family. MtnB subfamily. It depends on Zn(2+) as a cofactor.

It carries out the reaction 5-(methylsulfanyl)-D-ribulose 1-phosphate = 5-methylsulfanyl-2,3-dioxopentyl phosphate + H2O. The protein operates within amino-acid biosynthesis; L-methionine biosynthesis via salvage pathway; L-methionine from S-methyl-5-thio-alpha-D-ribose 1-phosphate: step 2/6. Catalyzes the dehydration of methylthioribulose-1-phosphate (MTRu-1-P) into 2,3-diketo-5-methylthiopentyl-1-phosphate (DK-MTP-1-P). In Granulibacter bethesdensis (strain ATCC BAA-1260 / CGDNIH1), this protein is Methylthioribulose-1-phosphate dehydratase.